The primary structure comprises 613 residues: Forkhead box protein O (613 aa).

4 disordered regions span residues 39–90 (RARS…KNSS), 182–205 (KSVR…RAKK), 217–269 (GLND…RLSP), and 317–360 (QGFS…PASG). Phosphothreonine; by PKB/AKT1 is present on T44. Residues 63–80 (TKASNQQLAPGDSQQAIQ) are compositionally biased toward polar residues. Residue S75 is modified to Phosphoserine. A compositionally biased stretch (low complexity) spans 81–90 (NANAAKKNSS). The segment at residues 95-201 (WGNLSYADLI…ETSRYEKRRG (107 aa)) is a DNA-binding region (fork-head). S190 bears the Phosphoserine; by PKB/AKT1 mark. Polar residues-rich tracts occupy residues 221 to 230 (ATPSPSSSVS) and 256 to 265 (RASSNASSCG). Phosphoserine; by PKB/AKT1 is present on S259. A phosphoserine mark is found at S262, S263, and S268. Over residues 327–336 (SQPPPPPYQP) the composition is skewed to pro residues. Residues 337–353 (PQHQQAQQQQQQQSPYA) show a composition bias toward low complexity.

Interacts with melt.

It localises to the cytoplasm. The protein localises to the nucleus. Functionally, transcription factor involved in the regulation of the insulin signaling pathway. Consistently activates both the downstream target Thor\d4EBP and the feedback control target InR. Involved in negative regulation of the cell cycle, modulating cell growth and proliferation. In response to cellular stresses, such as nutrient deprivation or increased levels of reactive oxygen species, foxo is activated and inhibits growth through the action of target genes such as Thor. Foxo activated in the adult fat body can regulate lifespan in adults; an insulin peptide itself may function as one secondary messenger of insulin-regulated aging. Also regulates Lip4, homolog of human acid lipases, thereby acting as a key modulator of lipid metabolism by insulin signaling and integrates insulin responses to glucose and lipid homeostasis. In Drosophila melanogaster (Fruit fly), this protein is Forkhead box protein O.